Consider the following 502-residue polypeptide: Probable cytosol aminopeptidase (502 aa).

Mn(2+) is bound by residues Lys-269 and Asp-274. Lys-281 is an active-site residue. Residues Asp-292, Asp-351, and Glu-353 each coordinate Mn(2+). The active site involves Arg-355.

The protein belongs to the peptidase M17 family. Requires Mn(2+) as cofactor.

The protein resides in the cytoplasm. The catalysed reaction is Release of an N-terminal amino acid, Xaa-|-Yaa-, in which Xaa is preferably Leu, but may be other amino acids including Pro although not Arg or Lys, and Yaa may be Pro. Amino acid amides and methyl esters are also readily hydrolyzed, but rates on arylamides are exceedingly low.. The enzyme catalyses Release of an N-terminal amino acid, preferentially leucine, but not glutamic or aspartic acids.. Presumably involved in the processing and regular turnover of intracellular proteins. Catalyzes the removal of unsubstituted N-terminal amino acids from various peptides. This chain is Probable cytosol aminopeptidase, found in Shewanella frigidimarina (strain NCIMB 400).